Reading from the N-terminus, the 148-residue chain is Histone H2B.1 (148 aa).

Basic and acidic residues predominate over residues 1–35; it reads MAPRAEKKPAEKKTAAERPVEENKAAEKAPAEKKP. The interval 1–56 is disordered; the sequence is MAPRAEKKPAEKKTAAERPVEENKAAEKAPAEKKPKAGKKLPPKEAGDKKKKRSKK. Position 2 is a n,N,N-trimethylalanine; alternate (A2). A2 is subject to N,N-dimethylalanine; alternate. Residue A2 is modified to N-methylalanine; alternate. K7 is modified (N6-acetyllysine; partial). At K12 the chain carries N6-acetyllysine. The residue at position 13 (K13) is an N6,N6-dimethyllysine. N6-acetyllysine occurs at positions 28, 33, and 39. Residue K40 is modified to N6-acetyllysine; partial. K144 participates in a covalent cross-link: Glycyl lysine isopeptide (Lys-Gly) (interchain with G-Cter in ubiquitin).

This sequence belongs to the histone H2B family. In terms of assembly, the nucleosome is a histone octamer containing two molecules each of H2A, H2B, H3 and H4 assembled in one H3-H4 heterotetramer and two H2A-H2B heterodimers. The octamer wraps approximately 147 bp of DNA. Interacts with AHL27. In terms of processing, can be acetylated to form H2BK6ac, H2BK33ac and H2BK34ac. Mono-, di- or trimethylated at the N-terminus to form H2BA1me1/2/3. H2BA1me2 may be acetylated to form H2BA1me2K6ac. Post-translationally, monoubiquitinated by BRE1 to form H2BK143ub1 and deubiquitinated by UBP26. Required for heterochromatic histone H3 di- and trimethylation at H3K4me. May give a specific tag for epigenetic transcriptional activation.

It localises to the nucleus. It is found in the chromosome. Core component of nucleosome. Nucleosomes wrap and compact DNA into chromatin, limiting DNA accessibility to the cellular machineries which require DNA as a template. Histones thereby play a central role in transcription regulation, DNA repair, DNA replication and chromosomal stability. DNA accessibility is regulated via a complex set of post-translational modifications of histones, also called histone code, and nucleosome remodeling. This is Histone H2B.1 from Arabidopsis thaliana (Mouse-ear cress).